The chain runs to 335 residues: Tumor necrosis factor receptor superfamily member 6 (335 aa).

Residues 1–25 (MLGIWTLLPLVLTSVARLSSKSVNA) form the signal peptide. The Extracellular segment spans residues 26–173 (QVTDINSKGL…KCKEEGSRSN (148 aa)). T28 is a glycosylation site (O-linked (GalNAc...) threonine). 3 TNFR-Cys repeats span residues 47–83 (QNLE…PDCV), 84–127 (PCQE…NTKC), and 128–166 (RCKP…TKCK). Cystine bridges form between C59–C73, C63–C82, C85–C101, C104–C119, C107–C127, C129–C143, C146–C157, and C149–C165. N118 and N136 each carry an N-linked (GlcNAc...) asparagine glycan. The chain crosses the membrane as a helical span at residues 174–190 (LGWLCLLLLPIPLIVWV). The Cytoplasmic portion of the chain corresponds to 191–335 (KRKEVQKTCR…NFRNEIQSLV (145 aa)). C199 is lipidated: S-palmitoyl cysteine. A Phosphoserine modification is found at S209. The tract at residues 212-317 (SPTLNPETVA…EKIQTIILKD (106 aa)) is interaction with HIPK3. T214 carries the post-translational modification Phosphothreonine. At S225 the chain carries Phosphoserine. The tract at residues 230–254 (SKYITTIAGVMTLSQVKGFVRKNGV) is interaction with CALM. The Death domain maps to 230–314 (SKYITTIAGV…TLAEKIQTII (85 aa)). The (Microbial infection) N-beta-linked (GlcNAc) arginine glycan is linked to R250.

Component of the death-induced signaling complex (DISC) composed of cell surface receptor FAS/CD95, adapter protein FADD and the CASP8 protease; recruitment of CASP8 to the complex is required for processing of CASP8 into the p18 and p10 subunits. Interacts directly (via DED domain) with NOL3 (via CARD domain); inhibits death-inducing signaling complex (DISC) assembly by inhibiting the increase in FAS-FADD binding induced by FAS activation. Binds DAXX. Interacts with HIPK3. Part of a complex containing HIPK3 and FADD. Binds RIPK1 and FAIM2. Interacts with BABAM2 and FEM1B. Interacts with CALM. In the absence of stimulation, interacts with BIRC2, DDX3X and GSK3B. The interaction with BIRC2 and DDX3X is further enhanced upon receptor stimulation and accompanied by DDX3X and BIRC2 cleavage. In terms of processing, (Microbial infection) Glycosylated at Arg-250 by enteropathogenic E.coli protein NleB1: arginine GlcNAcylation prevents homotypic/heterotypic death domain interactions. Palmitoylated. Palmitoylation by ZDHHC7 prevents the lysosomal degradation of FAS regulating its expression at the plasma membrane. Post-translationally, N- and O-glycosylated. O-glycosylated with core 1 or possibly core 8 glycans. As to expression, isoform 1 and isoform 6 are expressed at equal levels in resting peripheral blood mononuclear cells. After activation there is an increase in isoform 1 and decrease in the levels of isoform 6.

Its subcellular location is the cell membrane. It localises to the membrane raft. The protein localises to the secreted. Functionally, receptor for TNFSF6/FASLG. The adapter molecule FADD recruits caspase CASP8 to the activated receptor. The resulting death-inducing signaling complex (DISC) performs CASP8 proteolytic activation which initiates the subsequent cascade of caspases (aspartate-specific cysteine proteases) mediating apoptosis. FAS-mediated apoptosis may have a role in the induction of peripheral tolerance, in the antigen-stimulated suicide of mature T-cells, or both. The secreted isoforms 2 to 6 block apoptosis (in vitro). This Homo sapiens (Human) protein is Tumor necrosis factor receptor superfamily member 6 (FAS).